Consider the following 208-residue polypeptide: Outer-membrane lipoprotein carrier protein (208 aa).

The first 22 residues, 1–22 (MKKIFAIAALSLPLFSHFPAFA), serve as a signal peptide directing secretion.

It belongs to the LolA family. Monomer.

The protein resides in the periplasm. Functionally, participates in the translocation of lipoproteins from the inner membrane to the outer membrane. Only forms a complex with a lipoprotein if the residue after the N-terminal Cys is not an aspartate (The Asp acts as a targeting signal to indicate that the lipoprotein should stay in the inner membrane). In Shewanella halifaxensis (strain HAW-EB4), this protein is Outer-membrane lipoprotein carrier protein.